The chain runs to 466 residues: Benzoate transport protein (466 aa).

The Cytoplasmic segment spans residues 1-22; that stretch reads MSREINVNQMIDDSKLTPFHWR. Residues 23–43 traverse the membrane as a helical segment; that stretch reads VIILSTLIIIFDGYDLVIYGV. Over 44 to 60 the chain is Periplasmic; that stretch reads ALPLLMKEWAIDPVTAG. Residues 61–81 traverse the membrane as a helical segment; it reads FIGSIALFGMMFGALIFGTIA. Topologically, residues 82-93 are cytoplasmic; it reads DKLEHLGVSRKK. The helical transmembrane segment at 94-114 threads the bilayer; it reads VIAVCIILFSLCTVLCGFSET. Over 115-119 the chain is Periplasmic; it reads TTQFS. A helical transmembrane segment spans residues 120–140; the sequence is IFRFLAGVGIGGVMPNVIALV. The Cytoplasmic segment spans residues 141–150; sequence SEYAPKKFKS. Residues 151–171 form a helical membrane-spanning segment; the sequence is FFVTLMFSGYAIGGMTAAFLG. Residues 172–181 are Periplasmic-facing; that stretch reads SILVPLYGWK. Residues 182 to 202 traverse the membrane as a helical segment; that stretch reads IMFMIAGIPLVLLLPLMKVLP. At 203-258 the chain is on the cytoplasmic side; sequence ESIDYLVRKKKDETVRFIMTKMVPSYQYQPDHVFVLNSSNQNQAQAPVKMIFQEQR. The helical transmembrane segment at 259 to 279 threads the bilayer; the sequence is AFSTMMFWCSIFMTLIMVYAL. Over 280-297 the chain is Periplasmic; the sequence is GNWLPKLMIEAGYNLSKS. A helical membrane pass occupies residues 298 to 318; sequence LIFLFSLNVGGMIGSILGGYL. Topologically, residues 319–325 are cytoplasmic; sequence ADRYNVK. The helical transmembrane segment at 326 to 346 threads the bilayer; it reads FVTMGLLLLGAISLSLLSFQF. At 347-348 the chain is on the periplasmic side; sequence SS. The helical transmembrane segment at 349–369 threads the bilayer; it reads VILYILIACAGAASIGAQIML. Residues 370 to 387 are Cytoplasmic-facing; it reads LAYMAKFYAPNVRSTGIG. Residues 388–408 form a helical membrane-spanning segment; that stretch reads WGLGMGRVGAILGPILTGWLL. Over 409 to 414 the chain is Periplasmic; it reads SLQLPH. A helical transmembrane segment spans residues 415–435; that stretch reads FYNFLALSIPAVLGIVTVFLI. Topologically, residues 436 to 466 are cytoplasmic; that stretch reads NDRRMYQPEPISPIANQNDTTTVKVNEAVSH.

Belongs to the major facilitator superfamily. Aromatic acid:H(+) symporter (AAHS) (TC 2.A.1.15) family.

The protein localises to the cell inner membrane. Functionally, probable uptake of benzoate. In Acinetobacter baylyi (strain ATCC 33305 / BD413 / ADP1), this protein is Benzoate transport protein (benK).